A 258-amino-acid chain; its full sequence is Thiazole synthase (258 aa).

K97 functions as the Schiff-base intermediate with DXP in the catalytic mechanism. Residues G158, 184–185 (AG), and 206–207 (NT) each bind 1-deoxy-D-xylulose 5-phosphate.

It belongs to the ThiG family. As to quaternary structure, homotetramer. Forms heterodimers with either ThiH or ThiS.

It is found in the cytoplasm. It carries out the reaction [ThiS sulfur-carrier protein]-C-terminal-Gly-aminoethanethioate + 2-iminoacetate + 1-deoxy-D-xylulose 5-phosphate = [ThiS sulfur-carrier protein]-C-terminal Gly-Gly + 2-[(2R,5Z)-2-carboxy-4-methylthiazol-5(2H)-ylidene]ethyl phosphate + 2 H2O + H(+). It functions in the pathway cofactor biosynthesis; thiamine diphosphate biosynthesis. Functionally, catalyzes the rearrangement of 1-deoxy-D-xylulose 5-phosphate (DXP) to produce the thiazole phosphate moiety of thiamine. Sulfur is provided by the thiocarboxylate moiety of the carrier protein ThiS. In vitro, sulfur can be provided by H(2)S. The protein is Thiazole synthase of Marinomonas sp. (strain MWYL1).